The primary structure comprises 170 residues: uncharacterized protein (170 aa).

The N-terminal stretch at 1 to 28 (MTGGVMSQKFVVGAGLLVCSVCSLSAMA) is a signal peptide.

The protein belongs to the fimbrial protein family.

In terms of biological role, part of the yfcOPQRSUV fimbrial operon. Could contribute to adhesion to various surfaces in specific environmental niches. Increases adhesion to eukaryotic T24 bladder epithelial cells in the absence of fim genes. This is an uncharacterized protein from Escherichia coli (strain K12).